A 1176-amino-acid chain; its full sequence is MANTSLDMASSTSPSPSPESTTTPRKRIVVVGLGMVGIAFIEKLIKLDTQRQYEIVVIGEEPHVAYNRVGLTSFFSHREVEQLYLNPLEWYKQHLQTSSLTHHLSTAALSLSPATKSLTISPPPSTPSLTTLPYDHLILATGSSALLPTSTPGHDASGVFVYRNIADLQSLITWSSDTQIKGSTGVVVGGGLLGLEAAKALMDLQVFGRVVVIERNGWVLSRQVDGEAGALVLEGVRGLGVEVLTRKRVKEVECDESKDEGEKEKKRVKGIRFEDGEYLACSTICFAIGIKARDELAREAGITCAERGGGGIVVDDSLQTSAPDVYAIGECASWKGQTFGLIGPGVEMADVLAFNFTQAHLHTPRVFKRPDLSTKLKLLGVEVASFGDFFADRDGPKELPPKLRRELKKSGGKAEVKALTYKDPFLSVYKKYIFTSDGKYLLGGMMIGDTTDYVRLVPLVKTHKELDVPPSQLILGAKKSGDDNGDDDLPDDTQICSCHNVTKADLVAPLKSGECTSLGDLKSCTKAGTGCGGCMPLVTSIFNRTMASLGTEVKNNLCPHFPEYSRADLYNIISVKRLRTLPDVMREAGADADSLGCEACKPAIASIFASLWNDHVMSPAHHGLQDTNDRFMGNIQRNGTFSVVPRVAAGEITPEKLIVIGEVAKEYNLYTKITGGQRIDMFGAKKQDLLKIWKKLVDAGMESGHAYAKSLRTVKSCVGTTWCRYGVGDSVGMAVRLEERYKGLRGPHKIKGGVSGCTRECAEAGNKDFGLIATEKGFNILICGNGGTTPKHSVLLAKDVPPTNVIPIIDRFLMFYIRTADKLQRTARWLEALPGGIDYLKEVILEDRLGICASLEAQMQELVDSYFDEWAEALNNPAMQERFKQFANTDEGQPPMEVEIDRGQERPVMWPREDEGGSAKADFKGLRDKWSSTTWQPVLEASYFQGADDLPNGISASIKRGDTQLAVWRIKGKYYASQQMCPHKRTFALSDGFVGTDPSPSSCSSSALPPSPPSTPPRSSSPVTSPPQSPTSSATPATTASSSCTTNPSGPASPWISCPFHKRNFSLTSGSCKNDNELSIATFDVEERDDGMVYIKLPPVDELDRELGTKKWMVKKGEAGEGQLRELDELNKSKGVEGKKGRRGRKPGASEAGKEVGKKLVEAVGGGGCGGPGLEW.

The segment at 1 to 23 (MANTSLDMASSTSPSPSPESTTT) is disordered. Positions 10 to 23 (SSTSPSPSPESTTT) are enriched in low complexity. An FAD-binding site is contributed by 26–60 (KRIVVVGLGMVGIAFIEKLIKLDTQRQYEIVVIGE). NAD(+) is bound at residue 183–215 (STGVVVGGGLLGLEAAKALMDLQVFGRVVVIER). C496, C498, C531, and C534 together coordinate [2Fe-2S] cluster. The [4Fe-4S] cluster site is built by C717, C723, C757, and C761. Residue C761 participates in siroheme binding. The Rieske; atypical domain maps to 942–1094 (SYFQGADDLP…VEERDDGMVY (153 aa)). The [2Fe-2S] cluster site is built by C981 and H983. 2 stretches are compositionally biased toward low complexity: residues 998–1008 (PSPSSCSSSAL) and 1030–1049 (PTSSATPATTASSSCTTNPS). Residues 998–1051 (PSPSSCSSSALPPSPPSTPPRSSSPVTSPPQSPTSSATPATTASSSCTTNPSGP) form a disordered region. 2 residues coordinate [2Fe-2S] cluster: C1058 and H1061. The segment covering 1124-1139 (LRELDELNKSKGVEGK) has biased composition (basic and acidic residues). Residues 1124–1157 (LRELDELNKSKGVEGKKGRRGRKPGASEAGKEVG) are disordered.

The protein belongs to the nitrite and sulfite reductase 4Fe-4S domain family. Homodimer. Requires siroheme as cofactor. It depends on [4Fe-4S] cluster as a cofactor. The cofactor is FAD. [2Fe-2S] cluster serves as cofactor.

The catalysed reaction is NH4(+) + 3 NADP(+) + 2 H2O = nitrite + 3 NADPH + 5 H(+). It carries out the reaction NH4(+) + 3 NAD(+) + 2 H2O = nitrite + 3 NADH + 5 H(+). It participates in nitrogen metabolism; nitrate reduction (assimilation). This chain is Nitrite reductase [NAD(P)H] (nit-6), found in Neurospora crassa (strain ATCC 24698 / 74-OR23-1A / CBS 708.71 / DSM 1257 / FGSC 987).